The sequence spans 156 residues: ATP synthase subunit b (156 aa).

Residues 5–27 traverse the membrane as a helical segment; sequence ITLIGQMITFAIFVGFTMKFVWP.

The protein belongs to the ATPase B chain family. As to quaternary structure, F-type ATPases have 2 components, F(1) - the catalytic core - and F(0) - the membrane proton channel. F(1) has five subunits: alpha(3), beta(3), gamma(1), delta(1), epsilon(1). F(0) has three main subunits: a(1), b(2) and c(10-14). The alpha and beta chains form an alternating ring which encloses part of the gamma chain. F(1) is attached to F(0) by a central stalk formed by the gamma and epsilon chains, while a peripheral stalk is formed by the delta and b chains.

The protein localises to the cell inner membrane. Its function is as follows. F(1)F(0) ATP synthase produces ATP from ADP in the presence of a proton or sodium gradient. F-type ATPases consist of two structural domains, F(1) containing the extramembraneous catalytic core and F(0) containing the membrane proton channel, linked together by a central stalk and a peripheral stalk. During catalysis, ATP synthesis in the catalytic domain of F(1) is coupled via a rotary mechanism of the central stalk subunits to proton translocation. Functionally, component of the F(0) channel, it forms part of the peripheral stalk, linking F(1) to F(0). The chain is ATP synthase subunit b from Francisella philomiragia subsp. philomiragia (strain ATCC 25017 / CCUG 19701 / FSC 153 / O#319-036).